The primary structure comprises 323 residues: GTP 3',8-cyclase (323 aa).

In terms of domain architecture, Radical SAM core spans 4 to 226 (TFQRQINYLR…LEPFPDLATN (223 aa)). Arg13 contacts GTP. Residues Cys20 and Cys24 each coordinate [4Fe-4S] cluster. Position 26 (Tyr26) interacts with S-adenosyl-L-methionine. [4Fe-4S] cluster is bound at residue Cys27. Arg63 provides a ligand contact to GTP. Residue Gly67 participates in S-adenosyl-L-methionine binding. Position 94 (Thr94) interacts with GTP. An S-adenosyl-L-methionine-binding site is contributed by Ser118. A GTP-binding site is contributed by Lys155. Met189 provides a ligand contact to S-adenosyl-L-methionine. 2 residues coordinate [4Fe-4S] cluster: Cys252 and Cys255. Residue 257–259 (RLR) participates in GTP binding. Position 269 (Cys269) interacts with [4Fe-4S] cluster.

Belongs to the radical SAM superfamily. MoaA family. As to quaternary structure, monomer and homodimer. [4Fe-4S] cluster is required as a cofactor.

The catalysed reaction is GTP + AH2 + S-adenosyl-L-methionine = (8S)-3',8-cyclo-7,8-dihydroguanosine 5'-triphosphate + 5'-deoxyadenosine + L-methionine + A + H(+). Its pathway is cofactor biosynthesis; molybdopterin biosynthesis. Functionally, catalyzes the cyclization of GTP to (8S)-3',8-cyclo-7,8-dihydroguanosine 5'-triphosphate. This Moorella thermoacetica (strain ATCC 39073 / JCM 9320) protein is GTP 3',8-cyclase.